A 409-amino-acid chain; its full sequence is TAR DNA-binding protein 43 (409 aa).

RRM domains follow at residues 105-200 (SDLI…RCTE) and 191-262 (RKVF…TAEP). 2 disordered regions span residues 260–302 (AEPK…NQGG) and 341–409 (SQQN…GWGM). Basic and acidic residues predominate over residues 261-274 (EPKHNNNRQLERGG). Over residues 281–292 (FGNQGYPNSRPS) the composition is skewed to polar residues. Low complexity-rich tracts occupy residues 341–387 (SQQN…PNAG) and 395–409 (GFSS…GWGM).

In terms of assembly, homodimer.

It is found in the nucleus. The protein localises to the cytoplasm. It localises to the stress granule. The protein resides in the mitochondrion. Its function is as follows. Probably involved in transcriptional repression. May play a role in the maintenance of the circadian clock periodicity. This Xenopus tropicalis (Western clawed frog) protein is TAR DNA-binding protein 43 (tardbp).